Consider the following 763-residue polypeptide: MSVVELEDGVYESTAVIDNGSFGTRTIRFETGRLAQQAAGSAVAYLDDETMLLSATTASKNPKDHFDFFPLTVDVEERMYAAGRIPGSFFRREGRPSTDAILTCRLIDRPLRPSFVDGLRNEIQVVVTVMSLDPKDLYDVLAINAASMSTQLAGLPFSGPVGGARIALIDGTWVAFPTVEQLERAVFDMVVAGRIVGDGDSADVAIMMVEAEATENVVELVAGGAQAPTEAVVAEGLEAAKPFIKALCAAQQELADRAAKPAGEYPVFPDYEADVYDAVASVATEALAEALTIAGKTERNDRTDEIKVEVLERLAEPYAGREKEIGAAFRSLTKKLVRQRILTDHFRIDGRGITDIRALSAEVAVIPRAHGSALFERGETQILGVTTLDMIKMAQQIDSLGPENTKRYMHHYNFPPYSTGETGRVGSPKRREIGHGALAERALVPVLPSIEEFPYAIRQVSEALGSNGSTSMGSVCASTLALLNAGVPLKAPVAGIAMGLVSDDVDVDGKVEKRYVALTDILGAEDAFGDMDFKVAGTKDFVTALQLDTKLDGIPSQVLAGALSQAKDARLTILDVMAEAIDRPDEMSPYAPRITTIKVPVDKIGEVIGPKGKMINSITEETGAQISIEDDGTVFVGAADGLSAQAAIDKINAIANPQLPKVGERFLGTVVKTTDFGAFVSLLPGRDGLVHISKLGKGKRIAKVEDVVKVGDKLRVEIADIDNRGKISLVLVAEESAESAESAGDKGAEKAEGAAADVTPAEA.

Mg(2+) is bound by residues Asp-526 and Asp-532. Residues 592–651 (PRITTIKVPVDKIGEVIGPKGKMINSITEETGAQISIEDDGTVFVGAADGLSAQAAIDKI) form the KH domain. The 70-residue stretch at 663 to 732 (GERFLGTVVK…NRGKISLVLV (70 aa)) folds into the S1 motif domain. Residues 739–763 (SAESAGDKGAEKAEGAAADVTPAEA) are disordered. Positions 743–752 (AGDKGAEKAE) are enriched in basic and acidic residues.

The protein belongs to the polyribonucleotide nucleotidyltransferase family. The cofactor is Mg(2+).

It localises to the cytoplasm. It catalyses the reaction RNA(n+1) + phosphate = RNA(n) + a ribonucleoside 5'-diphosphate. Involved in mRNA degradation. Catalyzes the phosphorolysis of single-stranded polyribonucleotides processively in the 3'- to 5'-direction. The chain is Polyribonucleotide nucleotidyltransferase from Mycolicibacterium smegmatis (strain ATCC 700084 / mc(2)155) (Mycobacterium smegmatis).